Reading from the N-terminus, the 160-residue chain is Transcription elongation factor GreA (160 aa).

The stretch at 1-72 forms a coiled coil; it reads MAEKTYPMTQ…QIQILETKIR (72 aa).

The protein belongs to the GreA/GreB family.

In terms of biological role, necessary for efficient RNA polymerase transcription elongation past template-encoded arresting sites. The arresting sites in DNA have the property of trapping a certain fraction of elongating RNA polymerases that pass through, resulting in locked ternary complexes. Cleavage of the nascent transcript by cleavage factors such as GreA or GreB allows the resumption of elongation from the new 3'terminus. GreA releases sequences of 2 to 3 nucleotides. The chain is Transcription elongation factor GreA from Streptococcus agalactiae serotype Ia (strain ATCC 27591 / A909 / CDC SS700).